The chain runs to 435 residues: ATP-dependent RNA helicase RhlB (435 aa).

Residues 9–37 carry the Q motif motif; the sequence is QKFADLGLNPQVVEGLEKKGFEFCTPIQA. One can recognise a Helicase ATP-binding domain in the interval 40-219; it reads LPVLLSGQDI…FEHMHNPEHV (180 aa). 53 to 60 contacts ATP; that stretch reads AQTGTGKT. The DEAD box motif lies at 165–168; sequence DEAD. The Helicase C-terminal domain maps to 245-390; the sequence is ALLQTLIEEE…VSDYDSSALI (146 aa). The tract at residues 395-435 is disordered; it reads APVRTPSARNQQRRTNTGGARSGDRKSNNRRPRQPRQHKEA. Residues 401 to 413 show a composition bias toward polar residues; the sequence is SARNQQRRTNTGG. Basic residues predominate over residues 422–435; the sequence is NNRRPRQPRQHKEA.

The protein belongs to the DEAD box helicase family. RhlB subfamily. In terms of assembly, component of the RNA degradosome, which is a multiprotein complex involved in RNA processing and mRNA degradation.

It localises to the cytoplasm. The enzyme catalyses ATP + H2O = ADP + phosphate + H(+). Functionally, DEAD-box RNA helicase involved in RNA degradation. Has RNA-dependent ATPase activity and unwinds double-stranded RNA. The chain is ATP-dependent RNA helicase RhlB from Vibrio vulnificus (strain YJ016).